An 89-amino-acid chain; its full sequence is Small ribosomal subunit protein uS15 (89 aa).

The segment at 1–23 (MTLNTEAKQKIINKHQTHGTDTG) is disordered.

It belongs to the universal ribosomal protein uS15 family. Part of the 30S ribosomal subunit. Forms a bridge to the 50S subunit in the 70S ribosome, contacting the 23S rRNA.

Its function is as follows. One of the primary rRNA binding proteins, it binds directly to 16S rRNA where it helps nucleate assembly of the platform of the 30S subunit by binding and bridging several RNA helices of the 16S rRNA. In terms of biological role, forms an intersubunit bridge (bridge B4) with the 23S rRNA of the 50S subunit in the ribosome. The polypeptide is Small ribosomal subunit protein uS15 (Prochlorococcus marinus (strain SARG / CCMP1375 / SS120)).